A 500-amino-acid polypeptide reads, in one-letter code: L-arabinose isomerase (500 aa).

Mn(2+) is bound by residues glutamate 306, glutamate 333, histidine 350, and histidine 450.

This sequence belongs to the arabinose isomerase family. In terms of assembly, homohexamer. The cofactor is Mn(2+).

The enzyme catalyses beta-L-arabinopyranose = L-ribulose. It functions in the pathway carbohydrate degradation; L-arabinose degradation via L-ribulose; D-xylulose 5-phosphate from L-arabinose (bacterial route): step 1/3. Its function is as follows. Catalyzes the conversion of L-arabinose to L-ribulose. This is L-arabinose isomerase from Escherichia coli O157:H7.